Reading from the N-terminus, the 300-residue chain is Bifunctional protein FolD (300 aa).

NADP(+) contacts are provided by residues Gly-172 to Ser-174, Ser-206, and Ile-247.

This sequence belongs to the tetrahydrofolate dehydrogenase/cyclohydrolase family. In terms of assembly, homodimer.

It carries out the reaction (6R)-5,10-methylene-5,6,7,8-tetrahydrofolate + NADP(+) = (6R)-5,10-methenyltetrahydrofolate + NADPH. The enzyme catalyses (6R)-5,10-methenyltetrahydrofolate + H2O = (6R)-10-formyltetrahydrofolate + H(+). The protein operates within one-carbon metabolism; tetrahydrofolate interconversion. In terms of biological role, catalyzes the oxidation of 5,10-methylenetetrahydrofolate to 5,10-methenyltetrahydrofolate and then the hydrolysis of 5,10-methenyltetrahydrofolate to 10-formyltetrahydrofolate. The polypeptide is Bifunctional protein FolD (Rhodopirellula baltica (strain DSM 10527 / NCIMB 13988 / SH1)).